Here is a 151-residue protein sequence, read N- to C-terminus: U1 small nuclear ribonucleoprotein C (151 aa).

The Matrin-type zinc finger occupies 4 to 36 (YYCDYCDTYLTHDSPSVRKTHCTGRKHKDNVKF).

Belongs to the U1 small nuclear ribonucleoprotein C family. In terms of assembly, U1 snRNP is composed of the 7 core Sm proteins B/B', D1, D2, D3, E, F and G that assemble in a heptameric protein ring on the Sm site of the small nuclear RNA to form the core snRNP, and at least 3 U1 snRNP-specific proteins U1-70K, U1-A and U1-C. U1-C interacts with U1 snRNA and the 5' splice-site region of the pre-mRNA.

It is found in the nucleus. Its function is as follows. Component of the spliceosomal U1 snRNP, which is essential for recognition of the pre-mRNA 5' splice-site and the subsequent assembly of the spliceosome. U1-C is directly involved in initial 5' splice-site recognition for both constitutive and regulated alternative splicing. The interaction with the 5' splice-site seems to precede base-pairing between the pre-mRNA and the U1 snRNA. Stimulates commitment or early (E) complex formation by stabilizing the base pairing of the 5' end of the U1 snRNA and the 5' splice-site region. The protein is U1 small nuclear ribonucleoprotein C of Anopheles darlingi (Mosquito).